The primary structure comprises 134 residues: ATP synthase epsilon chain (134 aa).

It belongs to the ATPase epsilon chain family. F-type ATPases have 2 components, CF(1) - the catalytic core - and CF(0) - the membrane proton channel. CF(1) has five subunits: alpha(3), beta(3), gamma(1), delta(1), epsilon(1). CF(0) has three main subunits: a, b and c.

It localises to the cell membrane. In terms of biological role, produces ATP from ADP in the presence of a proton gradient across the membrane. The polypeptide is ATP synthase epsilon chain (Carboxydothermus hydrogenoformans (strain ATCC BAA-161 / DSM 6008 / Z-2901)).